We begin with the raw amino-acid sequence, 495 residues long: uncharacterized protein (495 aa).

It is found in the cytoplasm. The protein resides in the nucleus. This is an uncharacterized protein from Saccharomyces cerevisiae (strain ATCC 204508 / S288c) (Baker's yeast).